We begin with the raw amino-acid sequence, 182 residues long: NADH-dependent FAD reductase (182 aa).

Asp16 is a binding site for NAD(+). FAD is bound by residues 47-48 (NS), 62-64 (CVG), and His98. His143 is a binding site for NAD(+).

This sequence belongs to the non-flavoprotein flavin reductase family. In terms of assembly, homodimer.

It catalyses the reaction FADH2 + NAD(+) = FAD + NADH + 2 H(+). The protein operates within antibiotic biosynthesis. With respect to regulation, the SgcE6-SgcC hydroxylation activity decreases in the presence of excess FAD. Its function is as follows. Reductase component of a two-component system involved in the biosynthesis of the enediyne antitumor antibiotic C-1027. SgcE6 provides the FADH(2) required by both the halogenase SgcC3 and the monooxygenase SgcC through free diffusion. Accepts only NADH and FAD as substrates. This chain is NADH-dependent FAD reductase, found in Streptomyces globisporus.